Consider the following 269-residue polypeptide: Shikimate dehydrogenase (NADP(+)) (269 aa).

Shikimate-binding positions include 17–19 (SKS) and threonine 64. Lysine 68 serves as the catalytic Proton acceptor. Glutamate 80 lines the NADP(+) pocket. Asparagine 89 and aspartate 105 together coordinate shikimate. Residues 130–134 (GAGGA), 154–159 (NRTHAK), and methionine 213 each bind NADP(+). Tyrosine 215 serves as a coordination point for shikimate. Glycine 237 is an NADP(+) binding site.

Belongs to the shikimate dehydrogenase family. Homodimer.

It carries out the reaction shikimate + NADP(+) = 3-dehydroshikimate + NADPH + H(+). The protein operates within metabolic intermediate biosynthesis; chorismate biosynthesis; chorismate from D-erythrose 4-phosphate and phosphoenolpyruvate: step 4/7. In terms of biological role, involved in the biosynthesis of the chorismate, which leads to the biosynthesis of aromatic amino acids. Catalyzes the reversible NADPH linked reduction of 3-dehydroshikimate (DHSA) to yield shikimate (SA). The protein is Shikimate dehydrogenase (NADP(+)) of Neisseria flavescens.